Consider the following 172-residue polypeptide: Translation initiation factor IF-3 (172 aa).

Belongs to the IF-3 family. As to quaternary structure, monomer.

The protein resides in the cytoplasm. Functionally, IF-3 binds to the 30S ribosomal subunit and shifts the equilibrium between 70S ribosomes and their 50S and 30S subunits in favor of the free subunits, thus enhancing the availability of 30S subunits on which protein synthesis initiation begins. The polypeptide is Translation initiation factor IF-3 (Campylobacter jejuni subsp. jejuni serotype O:6 (strain 81116 / NCTC 11828)).